The following is a 185-amino-acid chain: Probable chorismate pyruvate-lyase (185 aa).

3 residues coordinate substrate: Arg75, Leu113, and Glu174.

This sequence belongs to the UbiC family.

It localises to the cytoplasm. It carries out the reaction chorismate = 4-hydroxybenzoate + pyruvate. It functions in the pathway cofactor biosynthesis; ubiquinone biosynthesis. Removes the pyruvyl group from chorismate, with concomitant aromatization of the ring, to provide 4-hydroxybenzoate (4HB) for the ubiquinone pathway. The polypeptide is Probable chorismate pyruvate-lyase (Aromatoleum aromaticum (strain DSM 19018 / LMG 30748 / EbN1) (Azoarcus sp. (strain EbN1))).